The following is a 341-amino-acid chain: tRNA N6-adenosine threonylcarbamoyltransferase (341 aa).

Fe cation contacts are provided by His-119 and His-123. Substrate is bound by residues 141-145, Asp-174, Gly-187, and Asn-279; that span reads MVSGG. Asp-307 is a binding site for Fe cation.

It belongs to the KAE1 / TsaD family. It depends on Fe(2+) as a cofactor.

Its subcellular location is the cytoplasm. The enzyme catalyses L-threonylcarbamoyladenylate + adenosine(37) in tRNA = N(6)-L-threonylcarbamoyladenosine(37) in tRNA + AMP + H(+). Required for the formation of a threonylcarbamoyl group on adenosine at position 37 (t(6)A37) in tRNAs that read codons beginning with adenine. Is involved in the transfer of the threonylcarbamoyl moiety of threonylcarbamoyl-AMP (TC-AMP) to the N6 group of A37, together with TsaE and TsaB. TsaD likely plays a direct catalytic role in this reaction. The sequence is that of tRNA N6-adenosine threonylcarbamoyltransferase from Oenococcus oeni (strain ATCC BAA-331 / PSU-1).